The following is a 337-amino-acid chain: tRNA N6-adenosine threonylcarbamoyltransferase (337 aa).

Positions 111 and 115 each coordinate Fe cation. Substrate is bound by residues 134–138 (LVSGG), D167, G180, and N272. D300 provides a ligand contact to Fe cation.

The protein belongs to the KAE1 / TsaD family. Fe(2+) serves as cofactor.

It localises to the cytoplasm. The enzyme catalyses L-threonylcarbamoyladenylate + adenosine(37) in tRNA = N(6)-L-threonylcarbamoyladenosine(37) in tRNA + AMP + H(+). In terms of biological role, required for the formation of a threonylcarbamoyl group on adenosine at position 37 (t(6)A37) in tRNAs that read codons beginning with adenine. Is involved in the transfer of the threonylcarbamoyl moiety of threonylcarbamoyl-AMP (TC-AMP) to the N6 group of A37, together with TsaE and TsaB. TsaD likely plays a direct catalytic role in this reaction. The protein is tRNA N6-adenosine threonylcarbamoyltransferase of Cronobacter sakazakii (strain ATCC BAA-894) (Enterobacter sakazakii).